The sequence spans 90 residues: Putative large ribosomal subunit protein uL23c (90 aa).

The segment at 1-46 is coded by first part of gene; sequence MDGIKYAVFTDKSIQLLGKKQYTSNVESRSTRTEIKHWVELWNSYE. The coded by second part of gene stretch occupies residues 47–90; sequence MNSHRLPGKGRRMGPIMGHTMHYRRMIITLQSSYSIPPLRKKRT.

The protein belongs to the universal ribosomal protein uL23 family. Part of the 50S ribosomal subunit.

It localises to the plastid. Its subcellular location is the chloroplast. Its function is as follows. Binds to 23S rRNA. In Spinacia oleracea (Spinach), this protein is Putative large ribosomal subunit protein uL23c (rpl23).